A 673-amino-acid polypeptide reads, in one-letter code: RAS guanyl-releasing protein 4 (673 aa).

Composition is skewed to basic residues over residues 1–10 (MNRKDIKRKS) and 20–32 (GRGRSRQARRHKT). 2 disordered regions span residues 1–34 (MNRKDIKRKSHQECSGKAGGRGRSRQARRHKTCP) and 164–188 (LGDASSLLSPGGPGPPPPMSSPGLG). The N-terminal Ras-GEF domain occupies 49–175 (GVLSESSCSE…DASSLLSPGG (127 aa)). Residues 164-173 (LGDASSLLSP) are compositionally biased toward low complexity. The Ras-GEF domain maps to 201–432 (ETEELAQHLT…YELSYAREPR (232 aa)). The 36-residue stretch at 466–501 (HVEQLVESVFKNYDPEGRGSISLEDFERLSGNFPFA) folds into the EF-hand domain. A Phorbol-ester/DAG-type zinc finger spans residues 540 to 590 (LHAFQEVTFRKPTFCHSCSGFLWGVTKQGYRCRDCGLCCHRHCRDQVRVEC). A disordered region spans residues 592–633 (KRPETKGDPGPPGAPVPATSLPPANCGSEESLSYTLSPDPES).

The protein belongs to the RASGRP family. As to expression, expressed by mast cells and their progenitors (at protein level). Expressed by dendritic cells. In terms of tissue distribution, expressed in neutrophils.

The protein localises to the cytoplasm. It is found in the cell membrane. Its function is as follows. Functions as a cation- and diacylglycerol (DAG)-regulated nucleotide exchange factor activating Ras through the exchange of bound GDP for GTP. In neutrophils, participates in a phospholipase C-activating N-formyl peptide-activated GPCR (G protein-coupled receptor) signaling pathway by promoting Ras-mediated activation of PIK3CG/PI3Kgamma to promote neutrophil functional responses. In CD117(+) dendritic cells and mast cells, participates in an lipopolysaccharide (LPS)-activated signaling pathway that stimulates the production of interferon-gamma and other pro-inflammatory cytokines by natural killer (NK) cells. May function in mast cell differentiation. Does not appear to be required for the development of B-cells, DC-cells, T-cells, or NK-cells. In terms of biological role, binds diacylglycerol (DAG). Unable to bind diacylglycerol (DAG). The chain is RAS guanyl-releasing protein 4 (Rasgrp4) from Mus musculus (Mouse).